We begin with the raw amino-acid sequence, 287 residues long: Cell wall protein PIR5 (287 aa).

The first 21 residues, 1–21 (MHYKKAFLASLLSSIALTAYA), serve as a signal peptide directing secretion. Positions 22 to 62 (PPEPWATLTPSSKMDGGTTEYRTSFGLAVIPFTVTESKVKR) are excised as a propeptide. PIR1/2/3 repeat units follow at residues 62-80 (RNVI…TQKL), 81-99 (PHPV…TQKV), 104-122 (SHIV…TAKN), and 144-162 (ATAV…ISSA).

Belongs to the PIR protein family. Covalently linked to beta-1,3-glucan of the inner cell wall layer via an alkali-sensitive ester linkage between the gamma-carboxyl group of glutamic acids, arising from specific glutamines within the PIR1/2/3 repeats, and hydroxyl groups of glucoses of beta-1,3-glucan chains.

The protein localises to the secreted. The protein resides in the cell wall. In terms of biological role, component of the outer cell wall layer. May be involved in meiosis and sporulation. This Saccharomyces cerevisiae (strain YJM789) (Baker's yeast) protein is Cell wall protein PIR5 (PIR5).